Reading from the N-terminus, the 201-residue chain is Large ribosomal subunit protein bL25 (201 aa).

The protein belongs to the bacterial ribosomal protein bL25 family. CTC subfamily. As to quaternary structure, part of the 50S ribosomal subunit; part of the 5S rRNA/L5/L18/L25 subcomplex. Contacts the 5S rRNA. Binds to the 5S rRNA independently of L5 and L18.

Functionally, this is one of the proteins that binds to the 5S RNA in the ribosome where it forms part of the central protuberance. The polypeptide is Large ribosomal subunit protein bL25 (Chlorobaculum parvum (strain DSM 263 / NCIMB 8327) (Chlorobium vibrioforme subsp. thiosulfatophilum)).